A 98-amino-acid chain; its full sequence is Acylphosphatase-1 (98 aa).

One can recognise an Acylphosphatase-like domain in the interval 8–98; it reads SVDYEVFGKV…LEHSTFSICK (91 aa). Catalysis depends on residues arginine 23 and asparagine 41.

This sequence belongs to the acylphosphatase family.

It catalyses the reaction an acyl phosphate + H2O = a carboxylate + phosphate + H(+). This is Acylphosphatase-1 (acyp1) from Xenopus tropicalis (Western clawed frog).